We begin with the raw amino-acid sequence, 746 residues long: NAD(P)H-quinone oxidoreductase subunit 5, chloroplastic (746 aa).

Helical transmembrane passes span 9 to 29, 40 to 60, 89 to 109, 125 to 145, 147 to 167, 185 to 205, 221 to 241, 258 to 278, 280 to 300, 327 to 347, 354 to 374, 396 to 416, 425 to 445, 547 to 567, 608 to 628, and 723 to 743; these read WIIP…LLLF, WTFL…YLSI, IDPL…LVLI, FAYM…SNLI, VYFF…FWFT, GDFG…SFEF, VNLL…IAKS, TPIS…FLVA, LLPL…IGII, LGYM…FHLI, ALLF…VGYS, TAFL…CFWS, LLFS…TAFY, ILFP…IGIP, FSVS…KPFY, and YLFL…FFYF.

The protein belongs to the complex I subunit 5 family. As to quaternary structure, NDH is composed of at least 16 different subunits, 5 of which are encoded in the nucleus.

Its subcellular location is the plastid. It localises to the chloroplast thylakoid membrane. It catalyses the reaction a plastoquinone + NADH + (n+1) H(+)(in) = a plastoquinol + NAD(+) + n H(+)(out). It carries out the reaction a plastoquinone + NADPH + (n+1) H(+)(in) = a plastoquinol + NADP(+) + n H(+)(out). NDH shuttles electrons from NAD(P)H:plastoquinone, via FMN and iron-sulfur (Fe-S) centers, to quinones in the photosynthetic chain and possibly in a chloroplast respiratory chain. The immediate electron acceptor for the enzyme in this species is believed to be plastoquinone. Couples the redox reaction to proton translocation, and thus conserves the redox energy in a proton gradient. The chain is NAD(P)H-quinone oxidoreductase subunit 5, chloroplastic (ndhF) from Olimarabidopsis pumila (Dwarf rocket).